Here is an 838-residue protein sequence, read N- to C-terminus: Multiphosphoryl transfer protein (838 aa).

The region spanning 7 to 147 (APVTPDLVRL…AVIVAALTGD (141 aa)) is the PTS EIIA type-2 domain. His67 acts as the Tele-phosphohistidine intermediate; for EIIA activity in catalysis. His67 bears the Phosphohistidine; by HPr mark. One can recognise an HPr domain in the interval 161–253 (AERFEWTIAY…LTAQEKADAE (93 aa)). Residue His175 is the Pros-phosphohistidine intermediate; for HPr activity of the active site. A Phosphohistidine; by EI modification is found at His175. Positions 274-838 (AIVGIGASPG…ALEAQREGQA (565 aa)) are PTS EI. His460 acts as the Tele-phosphohistidine intermediate; for PTS EI activity in catalysis. At His460 the chain carries Phosphohistidine; by autocatalysis. Phosphoenolpyruvate is bound by residues Arg567 and Arg603. Mg(2+) contacts are provided by Glu697 and Asp721. Phosphoenolpyruvate is bound by residues 720-721 (ND) and Arg731. Cys768 (proton donor) is an active-site residue.

Belongs to the PEP-utilizing enzyme family. Mg(2+) is required as a cofactor.

The protein resides in the cytoplasm. The catalysed reaction is L-histidyl-[protein] + phosphoenolpyruvate = N(pros)-phospho-L-histidyl-[protein] + pyruvate. Functionally, the phosphoenolpyruvate-dependent sugar phosphotransferase system (sugar PTS), a major carbohydrate active transport system, catalyzes the phosphorylation of incoming sugar substrates concomitantly with their translocation across the cell membrane. The enzyme II FruAB PTS system is involved in fructose transport. This Xanthomonas campestris pv. campestris (strain ATCC 33913 / DSM 3586 / NCPPB 528 / LMG 568 / P 25) protein is Multiphosphoryl transfer protein.